Consider the following 97-residue polypeptide: MKRISSDEVKKVAELARLELNENEIHQHAEQLEKILEYIKQLEKINTENIACTTRAIEVVNVLRKDERRDYENSDELLDLAPSRENKFFKVPKIINE.

It belongs to the GatC family. In terms of assembly, heterotrimer of A, B and C subunits.

The catalysed reaction is L-glutamyl-tRNA(Gln) + L-glutamine + ATP + H2O = L-glutaminyl-tRNA(Gln) + L-glutamate + ADP + phosphate + H(+). It catalyses the reaction L-aspartyl-tRNA(Asn) + L-glutamine + ATP + H2O = L-asparaginyl-tRNA(Asn) + L-glutamate + ADP + phosphate + 2 H(+). Functionally, allows the formation of correctly charged Asn-tRNA(Asn) or Gln-tRNA(Gln) through the transamidation of misacylated Asp-tRNA(Asn) or Glu-tRNA(Gln) in organisms which lack either or both of asparaginyl-tRNA or glutaminyl-tRNA synthetases. The reaction takes place in the presence of glutamine and ATP through an activated phospho-Asp-tRNA(Asn) or phospho-Glu-tRNA(Gln). The polypeptide is Aspartyl/glutamyl-tRNA(Asn/Gln) amidotransferase subunit C (Prochlorococcus marinus (strain MIT 9515)).